Reading from the N-terminus, the 117-residue chain is Large ribosomal subunit protein bL20 (117 aa).

Belongs to the bacterial ribosomal protein bL20 family.

Functionally, binds directly to 23S ribosomal RNA and is necessary for the in vitro assembly process of the 50S ribosomal subunit. It is not involved in the protein synthesizing functions of that subunit. The chain is Large ribosomal subunit protein bL20 from Vibrio atlanticus (strain LGP32) (Vibrio splendidus (strain Mel32)).